We begin with the raw amino-acid sequence, 2399 residues long: Protein DOP1A (2399 aa).

6 disordered regions span residues 556–598, 619–660, 1105–1124, 1166–1188, 1234–1263, and 1279–1308; these read PSGQ…SSES, NGQG…GAAG, SDSGCSQSSAGDNFSYEVDP, SVTSELEIESLQTKSSDLDPGKE, SPCISGTAQTLNDSSVPSETKSRQRSHSSI, and ETIVKESGKQPGAKPKVKLARKKDEDKKKA. Low complexity-rich tracts occupy residues 629-647 and 1105-1116; these read GSTSSETETASTVGSEETV and SDSGCSQSSAGD. Polar residues-rich tracts occupy residues 1166–1180 and 1234–1252; these read SVTSELEIESLQTKS and SPCISGTAQTLNDSSVPSE. Ser1261 carries the post-translational modification Phosphoserine.

This sequence belongs to the DOP1 family.

The protein localises to the golgi apparatus membrane. Functionally, may be involved in protein traffic between late Golgi and early endosomes. In Mus musculus (Mouse), this protein is Protein DOP1A (Dop1a).